A 21-amino-acid polypeptide reads, in one-letter code: Capsid vertex protein gp24 (21 aa).

Residues 1–21 (MAKINELLRESTTTNSNSIGR) form a disordered region. The span at 10-21 (ESTTTNSNSIGR) shows a compositional bias: polar residues.

It belongs to the T4 phage capsid protein family. In terms of assembly, homopentamer. A total of 55 subunits of gp24 forms the 11 pentamers. Interacts with portal protein gp20. Interacts with gp23 that forms 160 hexamers. Post-translationally, proteolytic cleavage give rise to gp24*.

It localises to the virion. In terms of biological role, capsid protein that self-associates to form 11 pentons, building the T=13 laevo capsid in association with 160 hexamers of gp23* and one dodecamer of gp20. The protein is Capsid vertex protein gp24 of Escherichia coli (Bacteriophage T6).